The chain runs to 195 residues: Peptidyl-tRNA hydrolase (195 aa).

Tyrosine 17 provides a ligand contact to tRNA. The active-site Proton acceptor is histidine 22. The tRNA site is built by tyrosine 68, asparagine 70, and asparagine 116.

It belongs to the PTH family. As to quaternary structure, monomer.

The protein localises to the cytoplasm. The catalysed reaction is an N-acyl-L-alpha-aminoacyl-tRNA + H2O = an N-acyl-L-amino acid + a tRNA + H(+). Its function is as follows. Hydrolyzes ribosome-free peptidyl-tRNAs (with 1 or more amino acids incorporated), which drop off the ribosome during protein synthesis, or as a result of ribosome stalling. Functionally, catalyzes the release of premature peptidyl moieties from peptidyl-tRNA molecules trapped in stalled 50S ribosomal subunits, and thus maintains levels of free tRNAs and 50S ribosomes. In Shewanella frigidimarina (strain NCIMB 400), this protein is Peptidyl-tRNA hydrolase.